Reading from the N-terminus, the 797-residue chain is Outer membrane protein assembly factor BamA (797 aa).

The N-terminal stretch at 1–19 (MKKLLIASLLFGTTTTVFA) is a signal peptide. POTRA domains lie at 22–89 (FVAK…VVAK), 90–170 (SIIS…INED), 173–259 (AKLA…VNEG), 262–341 (YDLR…VDAG), and 344–418 (LTVR…VKER).

Belongs to the BamA family. As to quaternary structure, part of the Bam complex.

The protein localises to the cell outer membrane. Functionally, part of the outer membrane protein assembly complex, which is involved in assembly and insertion of beta-barrel proteins into the outer membrane. This is Outer membrane protein assembly factor BamA from Haemophilus influenzae.